Consider the following 336-residue polypeptide: Glycerol-3-phosphate dehydrogenase [NAD(P)+] (336 aa).

S14, W15, R35, R36, and K109 together coordinate NADPH. 2 residues coordinate sn-glycerol 3-phosphate: K109 and G139. A143 contributes to the NADPH binding site. The sn-glycerol 3-phosphate site is built by K194, D247, S257, R258, and N259. The active-site Proton acceptor is K194. R258 contributes to the NADPH binding site. E284 contributes to the NADPH binding site.

This sequence belongs to the NAD-dependent glycerol-3-phosphate dehydrogenase family.

The protein localises to the cytoplasm. The enzyme catalyses sn-glycerol 3-phosphate + NAD(+) = dihydroxyacetone phosphate + NADH + H(+). The catalysed reaction is sn-glycerol 3-phosphate + NADP(+) = dihydroxyacetone phosphate + NADPH + H(+). The protein operates within membrane lipid metabolism; glycerophospholipid metabolism. Functionally, catalyzes the reduction of the glycolytic intermediate dihydroxyacetone phosphate (DHAP) to sn-glycerol 3-phosphate (G3P), the key precursor for phospholipid synthesis. The sequence is that of Glycerol-3-phosphate dehydrogenase [NAD(P)+] from Streptomyces griseus subsp. griseus (strain JCM 4626 / CBS 651.72 / NBRC 13350 / KCC S-0626 / ISP 5235).